The following is a 592-amino-acid chain: Ichor (592 aa).

Over residues 114–123 (NNNYMQSAYH) the composition is skewed to polar residues. 4 disordered regions span residues 114–156 (NNNY…VSSS), 343–377 (LQNR…QAPT), 416–439 (LSNP…MQAS), and 459–527 (HTTT…DLSG). Residues 124–148 (PQNQSNPTSTTQSNGGSNSNSNNSN) are compositionally biased toward low complexity. The span at 356 to 369 (SSGGGGGANQGAGI) shows a compositional bias: gly residues. Residues 459–469 (HTTTASTTGSE) show a composition bias toward polar residues. Residues 488–500 (QQQQQQQQQQQQQ) are compositionally biased toward low complexity. Positions 507–524 (PTTPQMSAISPSGFSASD) are enriched in polar residues. C2H2-type zinc fingers lie at residues 536–558 (HRCS…LRTH) and 564–586 (FRCD…QQIH).

It is found in the nucleus. Transcriptional activator. In tracheal terminal cells, regulates the transcription of factors involved in the formation of a mature apical extracellular matrix (aECM) which is essential for the integrity and shape of seamless tubes. The chain is Ichor from Drosophila melanogaster (Fruit fly).